Consider the following 76-residue polypeptide: NADH-ubiquinone oxidoreductase chain 4L (76 aa).

3 consecutive transmembrane segments (helical) span residues 1-21 (MTPV…GLAF), 29-49 (ALLC…LWAL), and 56-76 (YSVA…AGLA).

Belongs to the complex I subunit 4L family.

It is found in the mitochondrion membrane. The enzyme catalyses a ubiquinone + NADH + 5 H(+)(in) = a ubiquinol + NAD(+) + 4 H(+)(out). In terms of biological role, core subunit of the mitochondrial membrane respiratory chain NADH dehydrogenase (Complex I) which catalyzes electron transfer from NADH through the respiratory chain, using ubiquinone as an electron acceptor. Part of the enzyme membrane arm which is embedded in the lipid bilayer and involved in proton translocation. This is NADH-ubiquinone oxidoreductase chain 4L (MT-ND4L) from Oncorhynchus masou (Cherry salmon).